The following is a 626-amino-acid chain: Protein MICRORCHIDIA 2 (626 aa).

The stretch at Met-579 to Ala-626 forms a coiled coil.

It belongs to the MORC ATPase protein family. In terms of assembly, homodimer and heterodimer with MORC6. Component of an RNA-directed DNA methylation (RdDM) complex that contains at least MORC6, MORC1/CRT1, MORC2, SWI3D and SUVH9. Binds directly to SUVH9. Requires Mg(2+) as cofactor. Mn(2+) serves as cofactor.

The protein resides in the nucleus. Its subcellular location is the endosome. Mediator of defense signaling triggered by distinct classes of R proteins. Required during hypersensitive response (HR) that confers disease resistance to turnip crinkle virus (TCV). Contributes to resistance against Pseudomonas syringae and Hyaloperonospora arabidopsidis, at early stages prior to cytosolic calcium ions Ca(2+) accumulation. Required for pathogen-associated molecular pattern (PAMP)-triggered immunity, basal resistance, non-host resistance and systemic acquired resistance (SAR). Involved in RNA-directed DNA methylation (RdDM) as a component of the RdDM machinery and required for gene silencing. May also be involved in the regulation of chromatin architecture to maintain gene silencing. Exhibits ATPase activity. The chain is Protein MICRORCHIDIA 2 from Arabidopsis thaliana (Mouse-ear cress).